The sequence spans 507 residues: ATP synthase subunit alpha, chloroplastic (507 aa).

170 to 177 lines the ATP pocket; it reads GDRQTGKT. A Phosphothreonine modification is found at Thr-257.

It belongs to the ATPase alpha/beta chains family. In terms of assembly, F-type ATPases have 2 components, CF(1) - the catalytic core - and CF(0) - the membrane proton channel. CF(1) has five subunits: alpha(3), beta(3), gamma(1), delta(1), epsilon(1). CF(0) has four main subunits: a, b, b' and c.

Its subcellular location is the plastid. It is found in the chloroplast thylakoid membrane. The enzyme catalyses ATP + H2O + 4 H(+)(in) = ADP + phosphate + 5 H(+)(out). Functionally, produces ATP from ADP in the presence of a proton gradient across the membrane. The alpha chain is a regulatory subunit. The polypeptide is ATP synthase subunit alpha, chloroplastic (Draba nemorosa (Woodland whitlowgrass)).